The primary structure comprises 200 residues: Holliday junction branch migration complex subunit RuvA (200 aa).

The domain I stretch occupies residues 1 to 64 (MYAYFRGRLV…EDALQLYGFA (64 aa)). The domain II stretch occupies residues 65–143 (TEEEKQLFRL…KLAPVGSAVA (79 aa)). Positions 144-154 (SVAADRGGFRE) are flexible linker. The domain III stretch occupies residues 154–200 (EDAVNALMTLGFPRPVANQAVGCALEPEPDASLEVVIKRALATMHNR).

It belongs to the RuvA family. In terms of assembly, homotetramer. Forms an RuvA(8)-RuvB(12)-Holliday junction (HJ) complex. HJ DNA is sandwiched between 2 RuvA tetramers; dsDNA enters through RuvA and exits via RuvB. An RuvB hexamer assembles on each DNA strand where it exits the tetramer. Each RuvB hexamer is contacted by two RuvA subunits (via domain III) on 2 adjacent RuvB subunits; this complex drives branch migration. In the full resolvosome a probable DNA-RuvA(4)-RuvB(12)-RuvC(2) complex forms which resolves the HJ.

The protein resides in the cytoplasm. In terms of biological role, the RuvA-RuvB-RuvC complex processes Holliday junction (HJ) DNA during genetic recombination and DNA repair, while the RuvA-RuvB complex plays an important role in the rescue of blocked DNA replication forks via replication fork reversal (RFR). RuvA specifically binds to HJ cruciform DNA, conferring on it an open structure. The RuvB hexamer acts as an ATP-dependent pump, pulling dsDNA into and through the RuvAB complex. HJ branch migration allows RuvC to scan DNA until it finds its consensus sequence, where it cleaves and resolves the cruciform DNA. This Chlorobium phaeovibrioides (strain DSM 265 / 1930) (Prosthecochloris vibrioformis (strain DSM 265)) protein is Holliday junction branch migration complex subunit RuvA.